We begin with the raw amino-acid sequence, 753 residues long: CCR4-NOT transcription complex subunit 3 (753 aa).

The tract at residues 240 to 534 (ATSPPSHSHM…PPQFSTAPEI (295 aa)) is disordered. A compositionally biased stretch (low complexity) spans 257–268 (SSSTPTSTTSSS). Over residues 284–293 (DDKKRGRSTD) the composition is skewed to basic and acidic residues. At T292 the chain carries Phosphothreonine. Residues 294-315 (SEVSQSPAKNGSKPVHSNQHPQ) are compositionally biased toward polar residues. S299 carries the post-translational modification Phosphoserine. A compositionally biased stretch (pro residues) spans 317–330 (PAVPPTYPSGPPPA). The span at 350–376 (PSALGPKASPAPSHNSGTPAPYAQAVA) shows a compositional bias: low complexity. Gly residues predominate over residues 396–408 (SGGGGGGSGGGGS). The span at 424–433 (NGATSYSSVV) shows a compositional bias: polar residues. The segment covering 441–457 (ALSSSGGNNASSQALGP) has biased composition (low complexity). Pro residues predominate over residues 458-467 (PSGPHNPPPS). The span at 479 to 491 (GAGGVAPGSGNNS) shows a compositional bias: gly residues. Position 542 is a phosphoserine (S542). The repressor domain stretch occupies residues 661–753 (EFYQRLSTET…YRYLEDRDLQ (93 aa)).

This sequence belongs to the CNOT2/3/5 family. In terms of assembly, component of the CCR4-NOT complex; distinct complexes seem to exist that differ in the participation of probably mutually exclusive catalytic subunits. In the complex interacts directly with CNOT2. Interacts with TIP120B and NANOS2. Interacts with EBF1. Interacts in an RNA-independent manner with BICC1 (via KH domains). In terms of tissue distribution, ubiquitous. Highly expressed in brain, heart, thymus, spleen, kidney, liver, small intestine, lung and peripheral blood leukocytes.

It is found in the cytoplasm. The protein resides in the nucleus. It localises to the P-body. In terms of biological role, component of the CCR4-NOT complex which is one of the major cellular mRNA deadenylases and is linked to various cellular processes including bulk mRNA degradation, miRNA-mediated repression, translational repression during translational initiation and general transcription regulation. Additional complex functions may be a consequence of its influence on mRNA expression. May be involved in metabolic regulation; may be involved in recruitment of the CCR4-NOT complex to deadenylation target mRNAs involved in energy metabolism. Involved in mitotic progression and regulation of the spindle assembly checkpoint by regulating the stability of MAD1L1 mRNA. Can repress transcription and may link the CCR4-NOT complex to transcriptional regulation; the repressive function may involve histone deacetylases. Involved in the maintenance of embryonic stem (ES) cell identity. This is CCR4-NOT transcription complex subunit 3 from Homo sapiens (Human).